We begin with the raw amino-acid sequence, 519 residues long: Cytosol aminopeptidase (519 aa).

Ser-42 bears the Phosphoserine mark. Lys-45 carries the post-translational modification N6-succinyllysine. Ser-54 carries the phosphoserine modification. N6-succinyllysine occurs at positions 61 and 103. Phosphoserine occurs at positions 180 and 194. Residues Leu-202 and Met-203 each coordinate Zn(2+). Residue Lys-221 is modified to N6-acetyllysine; alternate. Lys-221 is subject to N6-succinyllysine; alternate. Ser-238 bears the Phosphoserine mark. Residues Lys-282 and Asp-287 each contribute to the Zn(2+) site. Substrate contacts are provided by Lys-282, Asp-287, Ser-292, and Lys-294. Asp-287 contributes to the Mg(2+) binding site. Lys-294 is an active-site residue. Zn(2+) is bound by residues Arg-303, Asp-305, Asp-364, and Glu-366. Residues Asp-305 and Asp-364 each coordinate substrate. Mg(2+) contacts are provided by Asp-364 and Glu-366. Residue Arg-368 is part of the active site. Lys-455 carries the post-translational modification N6-acetyllysine; alternate. The residue at position 455 (Lys-455) is an N6-succinyllysine; alternate. At Lys-476 the chain carries N6-succinyllysine. Position 489 is an N6-acetyllysine; alternate (Lys-489). An N6-succinyllysine; alternate modification is found at Lys-489.

The protein belongs to the peptidase M17 family. In terms of assembly, homohexamer. Requires Zn(2+) as cofactor. The cofactor is Mn(2+).

Its subcellular location is the cytoplasm. It carries out the reaction Release of an N-terminal amino acid, Xaa-|-Yaa-, in which Xaa is preferably Leu, but may be other amino acids including Pro although not Arg or Lys, and Yaa may be Pro. Amino acid amides and methyl esters are also readily hydrolyzed, but rates on arylamides are exceedingly low.. The enzyme catalyses an S-substituted L-cysteinylglycine + H2O = an S-substituted L-cysteine + glycine. It catalyses the reaction L-cysteinylglycine + H2O = L-cysteine + glycine. The catalysed reaction is S-benzyl-L-cysteinylglycine + H2O = S-benzyl-L-cysteine + glycine. It carries out the reaction Release of N-terminal proline from a peptide.. Bimane-S-cysteinylglycine-hydrolyzing activity is inhibited by o-phenanthroline or bestatin, and is activated by the addition of zinc chloride. Its function is as follows. Cytosolic metallopeptidase that catalyzes the removal of unsubstituted N-terminal hydrophobic amino acids from various peptides. The presence of Zn(2+) ions is essential for the peptidase activity, and the association with other cofactors can modulate the substrate spectificity of the enzyme. For instance, in the presence of Mn(2+), it displays a specific Cys-Gly hydrolyzing activity of Cys-Gly-S-conjugates. Involved in the metabolism of glutathione and in the degradation of glutathione S-conjugates, which may play a role in the control of the cell redox status. This Rattus norvegicus (Rat) protein is Cytosol aminopeptidase.